A 103-amino-acid polypeptide reads, in one-letter code: NADH dehydrogenase [ubiquinone] 1 beta subcomplex subunit 7 (103 aa).

Residues 27–69 (RDMCAHLLIPLNKCRQAEFYLPWKCEDERHVYEKCEYELVMER) enclose the CHCH domain. Short sequence motifs (cx9C motif) lie at residues 30 to 40 (CAHLLIPLNKC) and 51 to 61 (CEDERHVYEKC). 2 disulfides stabilise this stretch: Cys-30–Cys-61 and Cys-40–Cys-51.

Belongs to the complex I NDUFB7 subunit family. As to quaternary structure, complex I is composed of at least 49 different subunits.

The protein localises to the mitochondrion. Its subcellular location is the mitochondrion inner membrane. The protein resides in the mitochondrion intermembrane space. In terms of biological role, accessory subunit of the mitochondrial membrane respiratory chain NADH dehydrogenase (Complex I), that is believed not to be involved in catalysis. Complex I functions in the transfer of electrons from NADH to the respiratory chain. The immediate electron acceptor for the enzyme is believed to be ubiquinone. The sequence is that of NADH dehydrogenase [ubiquinone] 1 beta subcomplex subunit 7 from Arabidopsis thaliana (Mouse-ear cress).